The primary structure comprises 183 residues: ATP synthase subunit delta (183 aa).

It belongs to the ATPase delta chain family. F-type ATPases have 2 components, F(1) - the catalytic core - and F(0) - the membrane proton channel. F(1) has five subunits: alpha(3), beta(3), gamma(1), delta(1), epsilon(1). F(0) has three main subunits: a(1), b(2) and c(10-14). The alpha and beta chains form an alternating ring which encloses part of the gamma chain. F(1) is attached to F(0) by a central stalk formed by the gamma and epsilon chains, while a peripheral stalk is formed by the delta and b chains.

It localises to the cell inner membrane. Its function is as follows. F(1)F(0) ATP synthase produces ATP from ADP in the presence of a proton or sodium gradient. F-type ATPases consist of two structural domains, F(1) containing the extramembraneous catalytic core and F(0) containing the membrane proton channel, linked together by a central stalk and a peripheral stalk. During catalysis, ATP synthesis in the catalytic domain of F(1) is coupled via a rotary mechanism of the central stalk subunits to proton translocation. Functionally, this protein is part of the stalk that links CF(0) to CF(1). It either transmits conformational changes from CF(0) to CF(1) or is implicated in proton conduction. The polypeptide is ATP synthase subunit delta (Syntrophobacter fumaroxidans (strain DSM 10017 / MPOB)).